The primary structure comprises 694 residues: Polyphosphate kinase (694 aa).

Position 45 (asparagine 45) interacts with ATP. Residues arginine 367 and arginine 397 each coordinate Mg(2+). Histidine 427 acts as the Phosphohistidine intermediate in catalysis. Residues tyrosine 460, arginine 553, and histidine 580 each contribute to the ATP site.

This sequence belongs to the polyphosphate kinase 1 (PPK1) family. Mg(2+) serves as cofactor. Post-translationally, an intermediate of this reaction is the autophosphorylated ppk in which a phosphate is covalently linked to a histidine residue through a N-P bond.

It carries out the reaction [phosphate](n) + ATP = [phosphate](n+1) + ADP. Functionally, catalyzes the reversible transfer of the terminal phosphate of ATP to form a long-chain polyphosphate (polyP). The protein is Polyphosphate kinase of Campylobacter jejuni (strain RM1221).